A 280-amino-acid polypeptide reads, in one-letter code: Extracellular metalloprotease GLRG_06286 (280 aa).

A signal peptide spans 1–17 (MQVTFTLVAALAGMASA). The N-linked (GlcNAc...) asparagine glycan is linked to N51. Position 196 (H196) interacts with Zn(2+). Residue E197 is part of the active site. H200 contacts Zn(2+). The segment at 217–236 (DSIADTPAQSSPSSGCPVGR) is disordered. Cysteines 232 and 259 form a disulfide.

The protein belongs to the peptidase M43B family.

Its subcellular location is the secreted. Secreted metalloproteinase that allows assimilation of proteinaceous substrates. This is Extracellular metalloprotease GLRG_06286 from Colletotrichum graminicola (strain M1.001 / M2 / FGSC 10212) (Maize anthracnose fungus).